Consider the following 132-residue polypeptide: MANINKLYSDIDPEMKMDWNKDVSRSLGLRSIKNSLLGIITTRKGSRPFDPEFGCDLSDQLFENMTPLTADTVERNIESAVRNYEPRIDKLAVNVIPVYDDYTLIVEIRFSVIDNPDDIEQIKLQLASSNRV.

Belongs to the GpW/Gp25 family. As to quaternary structure, homodimer. Interacts with gp53 and with the (gp6)2-gp7 heterotrimeric molecule; The gp25-(gp6)2-gp7 module is involved in sheath contraction. Part of the baseplate macromolecular complex which consists of gp5, gp5.4, gp27 (central spike complex); gp6, gp25, gp53 (inner baseplate); gp7, gp8 (intermediate baseplate); gp9, gp10, gp11, gp12 (peripheral); gp48 and gp54 (proximal region of the tail tube).

The protein localises to the virion. Its function is as follows. Baseplate protein that is located next to the tail tube (inner baseplate). Involved in sheath assembly. The gp25-(gp6)2-gp7 module is involved in sheath contraction. This Enterobacteria phage T4 (Bacteriophage T4) protein is Baseplate wedge protein gp25 (25).